Here is a 299-residue protein sequence, read N- to C-terminus: Putative adenosine/adenine deaminase (299 aa).

Zn(2+) contacts are provided by His16 and His18. Residues His18 and Gly157 each contribute to the substrate site. His184 provides a ligand contact to Zn(2+). Glu187 functions as the Proton donor in the catalytic mechanism. Residue Asp265 coordinates Zn(2+). Residue Asp266 participates in substrate binding.

The protein belongs to the metallo-dependent hydrolases superfamily. Adenosine and AMP deaminases family. Requires Zn(2+) as cofactor.

Its function is as follows. Putative nucleoside deaminase. May catalyze the hydrolytic deamination of adenosine or some similar substrate and play a role in purine metabolism. In Treponema pallidum (strain Nichols), this protein is Putative adenosine/adenine deaminase.